Reading from the N-terminus, the 464-residue chain is Gamma-aminobutyric acid receptor subunit alpha-5 (464 aa).

The signal sequence occupies residues 1–25 (MDNGMLSRFIMTKTLLVFCISMTLS). Topologically, residues 26-260 (SHFGFSQMPT…FHLKRKIGYF (235 aa)) are extracellular. Residue asparagine 45 is glycosylated (N-linked (GlcNAc...) asparagine). Arginine 101 is a binding site for 4-aminobutanoate. N-linked (GlcNAc...) asparagine glycosylation is present at asparagine 145. Threonine 164 contacts 4-aminobutanoate. A disulfide bond links cysteine 173 and cysteine 187. Residues asparagine 207 and asparagine 236 are each glycosylated (N-linked (GlcNAc...) asparagine). Transmembrane regions (helical) follow at residues 261–281 (VIQTYLPCIMTVILSQVSFWL), 287–308 (PARTVFGVTTVLTMTTLSISAR), and 319–340 (AMDWFIAVCYAFVFSALIEFAT). The Cytoplasmic portion of the chain corresponds to 341-429 (VNYFTKRGWA…TYNSISKIDK (89 aa)). A Glycyl lysine isopeptide (Lys-Gly) (interchain with G-Cter in ubiquitin) cross-link involves residue lysine 355. The tract at residues 382 to 414 (KLTHPPNIPKEQLPGGTGNAVGTASIRASEEKT) is disordered. A helical transmembrane segment spans residues 430–450 (MSRIVFPILFGTFNLVYWATY).

The protein belongs to the ligand-gated ion channel (TC 1.A.9) family. Gamma-aminobutyric acid receptor (TC 1.A.9.5) subfamily. GABRA5 sub-subfamily. Heteropentamer, formed by a combination of alpha (GABRA1-6), beta (GABRB1-3), gamma (GABRG1-3), delta (GABRD), epsilon (GABRE), rho (GABRR1-3), pi (GABRP) and theta (GABRQ) chains, each subunit exhibiting distinct physiological and pharmacological properties. Expressed in brain areas such as cerebral cortex, hippocampal formation and olfactory bulb granular layer.

The protein resides in the postsynaptic cell membrane. The protein localises to the cell membrane. The catalysed reaction is chloride(in) = chloride(out). With respect to regulation, allosterically potentiated by alphaxalone. Allosterically inhibited by pregnenolone sulfate. Inhibited by zinc and lanthanum. Alpha subunit of the heteropentameric ligand-gated chloride channel gated by gamma-aminobutyric acid (GABA), a major inhibitory neurotransmitter in the brain. GABA-gated chloride channels, also named GABA(A) receptors (GABAAR), consist of five subunits arranged around a central pore and contain GABA active binding site(s) located at the alpha and beta subunit interface(s). When activated by GABA, GABAARs selectively allow the flow of chloride anions across the cell membrane down their electrochemical gradient. GABAARs containing alpha-5/GABRA5 subunits are mainly extrasynaptic and contribute to the tonic GABAergic inhibition in the hippocampus. Extrasynaptic alpha-5-containing GABAARs in CA1 pyramidal neurons play a role in learning and memory processes. This chain is Gamma-aminobutyric acid receptor subunit alpha-5, found in Rattus norvegicus (Rat).